A 486-amino-acid chain; its full sequence is Glutamyl-tRNA(Gln) amidotransferase subunit A (486 aa).

Active-site charge relay system residues include Lys-79 and Ser-154. Ser-178 serves as the catalytic Acyl-ester intermediate.

This sequence belongs to the amidase family. GatA subfamily. As to quaternary structure, heterotrimer of A, B and C subunits.

It catalyses the reaction L-glutamyl-tRNA(Gln) + L-glutamine + ATP + H2O = L-glutaminyl-tRNA(Gln) + L-glutamate + ADP + phosphate + H(+). Functionally, allows the formation of correctly charged Gln-tRNA(Gln) through the transamidation of misacylated Glu-tRNA(Gln) in organisms which lack glutaminyl-tRNA synthetase. The reaction takes place in the presence of glutamine and ATP through an activated gamma-phospho-Glu-tRNA(Gln). The chain is Glutamyl-tRNA(Gln) amidotransferase subunit A from Dehalococcoides mccartyi (strain ATCC BAA-2100 / JCM 16839 / KCTC 5957 / BAV1).